The following is a 169-amino-acid chain: ATP synthase subunit b (169 aa).

The helical transmembrane segment at 12–32 (HIYLGNALWYLICFAILLLLI) threads the bilayer.

The protein belongs to the ATPase B chain family. In terms of assembly, F-type ATPases have 2 components, F(1) - the catalytic core - and F(0) - the membrane proton channel. F(1) has five subunits: alpha(3), beta(3), gamma(1), delta(1), epsilon(1). F(0) has three main subunits: a(1), b(2) and c(10-14). The alpha and beta chains form an alternating ring which encloses part of the gamma chain. F(1) is attached to F(0) by a central stalk formed by the gamma and epsilon chains, while a peripheral stalk is formed by the delta and b chains.

The protein localises to the cell membrane. F(1)F(0) ATP synthase produces ATP from ADP in the presence of a proton or sodium gradient. F-type ATPases consist of two structural domains, F(1) containing the extramembraneous catalytic core and F(0) containing the membrane proton channel, linked together by a central stalk and a peripheral stalk. During catalysis, ATP synthesis in the catalytic domain of F(1) is coupled via a rotary mechanism of the central stalk subunits to proton translocation. In terms of biological role, component of the F(0) channel, it forms part of the peripheral stalk, linking F(1) to F(0). This is ATP synthase subunit b from Lactobacillus helveticus (strain DPC 4571).